The sequence spans 198 residues: Ribonuclease HII (198 aa).

One can recognise an RNase H type-2 domain in the interval 10–198; the sequence is HLVAGVDEVG…PVKRALGLAS (189 aa). 3 residues coordinate a divalent metal cation: Asp16, Glu17, and Asp108.

It belongs to the RNase HII family. It depends on Mn(2+) as a cofactor. Requires Mg(2+) as cofactor.

It localises to the cytoplasm. The enzyme catalyses Endonucleolytic cleavage to 5'-phosphomonoester.. Functionally, endonuclease that specifically degrades the RNA of RNA-DNA hybrids. This chain is Ribonuclease HII, found in Escherichia coli (strain ATCC 8739 / DSM 1576 / NBRC 3972 / NCIMB 8545 / WDCM 00012 / Crooks).